Consider the following 212-residue polypeptide: Cyclin-dependent kinase inhibitor 3 (212 aa).

The interval 1-24 is disordered; the sequence is MKPPISIQASEFDSSDEEPADDEQ. Positions 1–34 are interaction with CDK2; the sequence is MKPPISIQASEFDSSDEEPADDEQTPIQISWLPL. Over residues 13–24 the composition is skewed to acidic residues; it reads DSSDEEPADDEQ. A Tyrosine-protein phosphatase domain is found at 32–201; the sequence is LPLSRVNCSQ…FRDKLAAYLS (170 aa). The Phosphocysteine intermediate role is filled by cysteine 140.

This sequence belongs to the protein-tyrosine phosphatase family. As to quaternary structure, interacts with cyclin-dependent kinases such as CDK1, CDK2 and CDK3. Does not interact with CDK4. Interacts (via C-terminus) with phosphorylated CDK2 (via C-terminal helix). Interacts with MS4A3 (via C-terminus); the interaction enhances CDKN3 enzymatic activity.

The protein resides in the cytoplasm. The protein localises to the perinuclear region. The enzyme catalyses O-phospho-L-tyrosyl-[protein] + H2O = L-tyrosyl-[protein] + phosphate. The catalysed reaction is O-phospho-L-seryl-[protein] + H2O = L-seryl-[protein] + phosphate. It catalyses the reaction O-phospho-L-threonyl-[protein] + H2O = L-threonyl-[protein] + phosphate. May play a role in cell cycle regulation. Dual specificity phosphatase active toward substrates containing either phosphotyrosine or phosphoserine residues. Dephosphorylates CDK2 at 'Thr-160' in a cyclin-dependent manner. The polypeptide is Cyclin-dependent kinase inhibitor 3 (Rattus norvegicus (Rat)).